The primary structure comprises 213 residues: N-(5'-phosphoribosyl)anthranilate isomerase (213 aa).

Belongs to the TrpF family.

It carries out the reaction N-(5-phospho-beta-D-ribosyl)anthranilate = 1-(2-carboxyphenylamino)-1-deoxy-D-ribulose 5-phosphate. The protein operates within amino-acid biosynthesis; L-tryptophan biosynthesis; L-tryptophan from chorismate: step 3/5. This chain is N-(5'-phosphoribosyl)anthranilate isomerase, found in Methylibium petroleiphilum (strain ATCC BAA-1232 / LMG 22953 / PM1).